Reading from the N-terminus, the 300-residue chain is MDSYEKEESVASTSGIQDLQTLSELVGPENAGEGELTIAEEPEENPRRPRRYTKREVKCVSYHAYKEIEDKHPQHIKLQDWIPTPEEMSKSLCKRLILCGLYSAEKASEILRMPFTVSWEQSDTDPDCFIVSYTCIFCDAVIHDPMPIRWDPEVGIWVKYKPLRGIVGSAVFIMHKHQRNCSLVKPSTSCSEGPKPRPRHDPVLRCDMFEKHHKPRQKRPRRRSIDNESCASSSDTMANEPGSLCTNPLWNPGPLLSGLLEESSNLPNLEVHMSGGPFWEEVYGDSILGPPSGSGEHSVL.

The tract at residues 1 to 50 is disordered; that stretch reads MDSYEKEESVASTSGIQDLQTLSELVGPENAGEGELTIAEEPEENPRRPR. Over residues 10-23 the composition is skewed to polar residues; sequence VASTSGIQDLQTLS. The DNA-binding element occupies 89–200; that stretch reads SKSLCKRLIL…SEGPKPRPRH (112 aa). The interval 209–244 is disordered; the sequence is FEKHHKPRQKRPRRRSIDNESCASSSDTMANEPGSL. Positions 211 to 222 are enriched in basic residues; it reads KHHKPRQKRPRR. A Nuclear localization signal motif is present at residues 214–223; it reads KPRQKRPRRR. Residues 224–300 form a transactivation domain region; sequence SIDNESCASS…PSGSGEHSVL (77 aa). Polar residues predominate over residues 227–237; the sequence is NESCASSSDTM.

As to quaternary structure, homodimer or homomultimer. Forms complexes with the host nuclear factors NFIA, NFIB, NFIC or NFIX.

It localises to the host nucleus. In terms of biological role, transcriptional transactivator that activates the viral internal promoter (IP), thereby enhancing its own expression. This transactivation is repressed by nuclear factor I. Also transactivates the long terminal repeat (LTR) promoter, thereby inducing structural gene expression, initiating the late phase of infection. It is therefore a key regulator of viral gene expression. It directly binds to and activates DNA target sites of viral promoters and those of distinct cellular genes. Required for viral replication. This is Protein Bel-1 (bel1) from Human spumaretrovirus (SFVcpz(hu)).